Reading from the N-terminus, the 97-residue chain is Co-chaperonin GroES (97 aa).

This sequence belongs to the GroES chaperonin family. As to quaternary structure, heptamer of 7 subunits arranged in a ring. Interacts with the chaperonin GroEL.

The protein localises to the cytoplasm. Together with the chaperonin GroEL, plays an essential role in assisting protein folding. The GroEL-GroES system forms a nano-cage that allows encapsulation of the non-native substrate proteins and provides a physical environment optimized to promote and accelerate protein folding. GroES binds to the apical surface of the GroEL ring, thereby capping the opening of the GroEL channel. The sequence is that of Co-chaperonin GroES from Klebsiella pneumoniae (strain 342).